Consider the following 456-residue polypeptide: CBL-interacting protein kinase 9 (456 aa).

The 256-residue stretch at 27–282 (YELGKTIGEG…IAQILEDDWF (256 aa)) folds into the Protein kinase domain. ATP-binding positions include 33-41 (IGEGSFAKV) and K56. D150 (proton acceptor) is an active-site residue. The interval 168 to 197 (DFGLSAFAPQTKEDGLLHTACGTPNYVAPE) is activation loop. Residues 318-343 (REKPESMNAFALISRSQGFNLGNLFE) enclose the NAF domain. Residues 351–380 (KRETSFTSQCTPQEIMSKIEEACGPLGFNV) are PPI.

Belongs to the protein kinase superfamily. CAMK Ser/Thr protein kinase family. SNF1 subfamily. The cofactor is Mn(2+).

It carries out the reaction L-seryl-[protein] + ATP = O-phospho-L-seryl-[protein] + ADP + H(+). The catalysed reaction is L-threonyl-[protein] + ATP = O-phospho-L-threonyl-[protein] + ADP + H(+). In terms of biological role, CIPK serine-threonine protein kinases interact with CBL proteins. Binding of a CBL protein to the regulatory NAF domain of CIPK protein lead to the activation of the kinase in a calcium-dependent manner. The sequence is that of CBL-interacting protein kinase 9 (CIPK9) from Oryza sativa subsp. japonica (Rice).